A 274-amino-acid chain; its full sequence is Proteasome subunit beta (274 aa).

A propeptide spans 1–52 (removed in mature form; by autocatalysis); that stretch reads MPDPTGVAGRLPAVFMTPGTSSFTDFLSVAAPDLLPGARGPLPAPVTDAAHG. T53 acts as the Nucleophile in catalysis.

This sequence belongs to the peptidase T1B family. The 20S proteasome core is composed of 14 alpha and 14 beta subunits that assemble into four stacked heptameric rings, resulting in a barrel-shaped structure. The two inner rings, each composed of seven catalytic beta subunits, are sandwiched by two outer rings, each composed of seven alpha subunits. The catalytic chamber with the active sites is on the inside of the barrel. Has a gated structure, the ends of the cylinder being occluded by the N-termini of the alpha-subunits. Is capped by the proteasome-associated ATPase, ARC.

The protein localises to the cytoplasm. It carries out the reaction Cleavage of peptide bonds with very broad specificity.. The protein operates within protein degradation; proteasomal Pup-dependent pathway. Its activity is regulated as follows. The formation of the proteasomal ATPase ARC-20S proteasome complex, likely via the docking of the C-termini of ARC into the intersubunit pockets in the alpha-rings, may trigger opening of the gate for substrate entry. Interconversion between the open-gate and close-gate conformations leads to a dynamic regulation of the 20S proteasome proteolysis activity. Component of the proteasome core, a large protease complex with broad specificity involved in protein degradation. The chain is Proteasome subunit beta from Parafrankia sp. (strain EAN1pec).